The chain runs to 328 residues: Formimidoylglutamase (328 aa).

Mn(2+)-binding residues include His133, Asp159, His161, Asp163, Asp253, and Asp255.

This sequence belongs to the arginase family. Mn(2+) is required as a cofactor.

The enzyme catalyses N-formimidoyl-L-glutamate + H2O = formamide + L-glutamate. It participates in amino-acid degradation; L-histidine degradation into L-glutamate; L-glutamate from N-formimidoyl-L-glutamate (hydrolase route): step 1/1. Catalyzes the conversion of N-formimidoyl-L-glutamate to L-glutamate and formamide. The sequence is that of Formimidoylglutamase from Streptococcus pyogenes serotype M28 (strain MGAS6180).